Consider the following 167-residue polypeptide: Putative lipoprotein YteS (167 aa).

Residues 1 to 20 (MTKRIRTALCVIVSVLFLAS) form the signal peptide. The N-palmitoyl cysteine moiety is linked to residue Cys21. Cys21 carries the S-diacylglycerol cysteine lipid modification.

The protein localises to the cell membrane. May play a role in the degradation of type I rhamnogalacturonan derived from plant cell walls. The protein is Putative lipoprotein YteS (yteS) of Bacillus subtilis (strain 168).